A 233-amino-acid polypeptide reads, in one-letter code: Orotidine 5'-phosphate decarboxylase (233 aa).

Residues D11, K34, 61-70 (DLKLHDIPNT), T117, R179, Q189, G209, and R210 contribute to the substrate site. The active-site Proton donor is the K63.

It belongs to the OMP decarboxylase family. Type 1 subfamily. In terms of assembly, homodimer.

It catalyses the reaction orotidine 5'-phosphate + H(+) = UMP + CO2. The protein operates within pyrimidine metabolism; UMP biosynthesis via de novo pathway; UMP from orotate: step 2/2. Its function is as follows. Catalyzes the decarboxylation of orotidine 5'-monophosphate (OMP) to uridine 5'-monophosphate (UMP). This Streptococcus agalactiae serotype III (strain NEM316) protein is Orotidine 5'-phosphate decarboxylase.